Reading from the N-terminus, the 305-residue chain is Lipoyl synthase (305 aa).

Cysteine 41, cysteine 46, cysteine 52, cysteine 68, cysteine 72, cysteine 75, and serine 281 together coordinate [4Fe-4S] cluster. The Radical SAM core domain occupies 54–270; it reads GARRTATFMI…RKVAMDKGFK (217 aa). The segment covering 283 to 298 has biased composition (basic and acidic residues); sequence HADEQVNEAAKEKQRQ. The tract at residues 283 to 305 is disordered; it reads HADEQVNEAAKEKQRQGEAQLNS.

The protein belongs to the radical SAM superfamily. Lipoyl synthase family. [4Fe-4S] cluster is required as a cofactor.

The protein resides in the cytoplasm. The enzyme catalyses [[Fe-S] cluster scaffold protein carrying a second [4Fe-4S](2+) cluster] + N(6)-octanoyl-L-lysyl-[protein] + 2 oxidized [2Fe-2S]-[ferredoxin] + 2 S-adenosyl-L-methionine + 4 H(+) = [[Fe-S] cluster scaffold protein] + N(6)-[(R)-dihydrolipoyl]-L-lysyl-[protein] + 4 Fe(3+) + 2 hydrogen sulfide + 2 5'-deoxyadenosine + 2 L-methionine + 2 reduced [2Fe-2S]-[ferredoxin]. It participates in protein modification; protein lipoylation via endogenous pathway; protein N(6)-(lipoyl)lysine from octanoyl-[acyl-carrier-protein]. Functionally, catalyzes the radical-mediated insertion of two sulfur atoms into the C-6 and C-8 positions of the octanoyl moiety bound to the lipoyl domains of lipoate-dependent enzymes, thereby converting the octanoylated domains into lipoylated derivatives. The protein is Lipoyl synthase of Staphylococcus aureus (strain bovine RF122 / ET3-1).